The primary structure comprises 591 residues: V-type ATP synthase alpha chain (591 aa).

233 to 240 (GPFGAGKT) serves as a coordination point for ATP.

It belongs to the ATPase alpha/beta chains family.

The enzyme catalyses ATP + H2O + 4 H(+)(in) = ADP + phosphate + 5 H(+)(out). Functionally, produces ATP from ADP in the presence of a proton gradient across the membrane. The V-type alpha chain is a catalytic subunit. This Streptococcus pneumoniae serotype 19F (strain G54) protein is V-type ATP synthase alpha chain.